The primary structure comprises 602 residues: Bifunctional lycopene cyclase/phytoene synthase (602 aa).

Positions 1–241 (MYDYAFVHLK…IVGGMAAFDQ (241 aa)) are lycopene beta-cyclase. A run of 7 helical transmembrane segments spans residues 6-26 (FVHLKFTVPAAVLLTAIAYPI), 30-50 (IHLIQTGFLVVVAFTAALPWD), 76-96 (FEELFFFVIQTYITALVYILF), 118-138 (VVKVTGQVVLVALSVWGWNAA), 146-166 (YLGLILVWACPFLLAIWTLAG), 168-188 (FILSLPWYATVLPMFLPTFYL), and 230-250 (MLIVGGMAAFDQYLAVIYAFP). Residues 248-602 (AFPTLFPKVN…STLLRALYEQ (355 aa)) are phytoene synthase.

In the N-terminal section; belongs to the lycopene beta-cyclase family. This sequence in the C-terminal section; belongs to the phytoene/squalene synthase family.

The protein resides in the membrane. The catalysed reaction is all-trans-lycopene = gamma-carotene. It carries out the reaction gamma-carotene = all-trans-beta-carotene. The enzyme catalyses 2 (2E,6E,10E)-geranylgeranyl diphosphate = 15-cis-phytoene + 2 diphosphate. The protein operates within carotenoid biosynthesis; beta-carotene biosynthesis. It functions in the pathway carotenoid biosynthesis; phytoene biosynthesis; all-trans-phytoene from geranylgeranyl diphosphate: step 1/1. Its function is as follows. Bifunctional enzyme that catalyzes the reactions from geranylgeranyl diphosphate to phytoene (phytoene synthase) and from lycopene to beta-carotene via the intermediate gamma-carotene and from 3,4-didehydrolycopene to torulene (lycopene cyclase). Torulene is further processed to the acidic carotenoid neurosporaxanthin. The cyclase preferentially catalyzes single cyclizations at only one end of the substrate to produce monocyclic carotenoids. Neurosporaxanthin is synthesized from geranyl-geranyl pyrophosphate (GGPP) through several enzymatic activities. Phytoene synthase activity performed by the bifunctional enzyme al-2 first produces phytoene from geranyl-geranyl pyrophosphate (GGPP). The phytoene dehydrogenase al-1 then introduces 5 desaturations to lead to 3,4-didehydrolycopene via the intermediates phytofluene, zeta-carotene, neurosporene and lycopene. Al-2 cyclase activity then converts 3,4-didehydrolycopene into torulene. Al-2 can also convet lycopene into gamma-carotene which in turn is converted to beta-carotene by an additional al-2 cyclization reaction. Torulene is the substrate of the dioxidase cao-2 that breaks the molecule, removing five carbon atoms to yield beta-apo-4'-carotenal, whereas the aldehyde dehydrogenase ylo-1 mediates the last step by converting beta-apo-4'-carotenal into neurosporaxanthin. This is Bifunctional lycopene cyclase/phytoene synthase from Neurospora crassa (strain ATCC 24698 / 74-OR23-1A / CBS 708.71 / DSM 1257 / FGSC 987).